The sequence spans 224 residues: Thymidine kinase, cytosolic (224 aa).

A Phosphoserine modification is found at serine 13. Residues 26–33, 58–60, and 98–101 contribute to the ATP site; these read GPMFSGKS, DTR, and DEGQ. Glutamate 99 functions as the Proton acceptor in the catalytic mechanism. Phenylalanine 129 is a binding site for substrate. Zn(2+) is bound by residues cysteine 154 and cysteine 157. Residues 173-177 and tyrosine 182 each bind substrate; that span reads VEVIG. 2 residues coordinate Zn(2+): cysteine 186 and cysteine 189. The short motif at 203 to 205 is the KEN box element; sequence KEN.

Belongs to the thymidine kinase family. As to quaternary structure, homotetramer. Tetramerization from dimerization is induced by ATP and increases catalytic efficiency due to a high affinity for thymidine. Tetramerization is inhibited by phosphorylation at Ser-13. Interacts (via the KEN box) with FZR1. Post-translationally, phosphorylated on Ser-13 in mitosis. Phosphorylation of Ser-13 by CDK1 during mitosis reduces homotetramerization and catalytic efficiency when DNA replication is complete and intracellular TK1 is still present at a high level. Polyubiquitinated. Postmitosis, ubiquitination leads to proteasomal degradation. The KEN box sequence located at the C-terminal region targets for degradation by the anaphase promoting complex (APC/C) activated and rate-limited by FZR1.

It is found in the cytoplasm. It carries out the reaction thymidine + ATP = dTMP + ADP + H(+). In terms of biological role, cell-cycle-regulated enzyme of importance in nucleotide metabolism. Catalyzes the first enzymatic step in the salvage pathway converting thymidine into thymidine monophosphate. Transcriptional regulation limits expression to the S phase of the cell cycle and transient expression coincides with the oscillation in the intracellular dTTP concentration. The chain is Thymidine kinase, cytosolic (TK1) from Gallus gallus (Chicken).